The following is a 2772-amino-acid chain: Protein DDB_G0276689 (2772 aa).

Disordered regions lie at residues 50 to 82, 371 to 415, 475 to 514, 612 to 650, 685 to 708, and 933 to 982; these read QQLK…NNNN, NLET…NGKS, LDIN…KNNL, NKNN…NNNE, LRGS…DSSL, and LVNN…NNSN. Composition is skewed to low complexity over residues 376-412, 478-514, 614-649, and 688-708; these read NNNN…NNNN, NSKN…KNNL, and SFSP…DSSL. The stretch at 1065 to 1089 is one LRR 1 repeat; the sequence is LSKWILNLDDNNYNHIPFMSLVLMP. A disordered region spans residues 1282–1319; it reads NNNNIDNNNNNNNNNNNNNNNNNNNNNNNNNNNNNNNN. LRR repeat units lie at residues 1393–1416 and 1543–1567; these read LSNL…TPKN and HKDV…SFSN. Low complexity predominate over residues 1587-1619; it reads QNNNYNNNNYNNNYNNNNNNNNNNNNNNNNNNN. The tract at residues 1587–1622 is disordered; it reads QNNNYNNNNYNNNYNNNNNNNNNNNNNNNNNNNIDN. The stretch at 1899-1922 is one LRR 4 repeat; that stretch reads LEELTKQEIGYQVLLVLPTDLQVE. Polar residues-rich tracts occupy residues 1999–2011 and 2073–2083; these read YVSN…NDQI and LNIVHSTSPNS. 3 disordered regions span residues 1999–2021, 2054–2083, and 2367–2386; these read YVSN…KDKK, EISN…SPNS, and NNSS…NNNN. The LRR 5 repeat unit spans residues 2414-2439; it reads TTIINNIEMDKNRLDEAIYYLKKYGN.

The chain is Protein DDB_G0276689 from Dictyostelium discoideum (Social amoeba).